The chain runs to 419 residues: Transcription termination factor Rho (419 aa).

In terms of domain architecture, Rho RNA-BD spans 48-123; it reads DIFGDGVLEI…LKVNAVNYDK (76 aa). 3 RNA-binding regions span residues 61 to 66, 78 to 80, and 108 to 110; these read GFGFLR, DIY, and ERY. ATP contacts are provided by residues 169-174, 181-186, and Arg-212; these read GRGQRG and KAGKTI. Residues 284–288 are RNA-binding 2; that stretch reads VLTGG.

It belongs to the Rho family. In terms of assembly, homohexamer. The homohexamer assembles into an open ring structure.

In terms of biological role, facilitates transcription termination by a mechanism that involves Rho binding to the nascent RNA, activation of Rho's RNA-dependent ATPase activity, and release of the mRNA from the DNA template. The polypeptide is Transcription termination factor Rho (Buchnera aphidicola subsp. Schizaphis graminum (strain Sg)).